The sequence spans 90 residues: Barrier-to-autointegration factor (90 aa).

Phosphoserine occurs at positions 2 and 3. At threonine 4 the chain carries Phosphothreonine. The residue at position 5 (serine 5) is a Phosphoserine.

This sequence belongs to the BAF family. As to quaternary structure, homodimer.

The protein resides in the nucleus. It localises to the chromosome. Its subcellular location is the nucleus envelope. The protein localises to the cytoplasm. Non-specific DNA-binding protein that plays key roles in mitotic nuclear reassembly, chromatin organization, DNA damage response, gene expression and intrinsic immunity against foreign DNA. Contains two non-specific double-stranded DNA (dsDNA)-binding sites which promote DNA cross-bridging. Plays a key role in nuclear membrane reformation at the end of mitosis by driving formation of a single nucleus in a spindle-independent manner. Transiently cross-bridges anaphase chromosomes via its ability to bridge distant DNA sites, leading to the formation of a dense chromatin network at the chromosome ensemble surface that limits membranes to the surface. Also acts as a negative regulator of innate immune activation by restricting CGAS activity toward self-DNA upon acute loss of nuclear membrane integrity. Outcompetes CGAS for DNA-binding, thereby preventing CGAS activation and subsequent damaging autoinflammatory responses. Also involved in DNA damage response; acts by inhibiting the ADP-ribosyltransferase activity of PARP1. Involved in the recognition of exogenous dsDNA in the cytosol: associates with exogenous dsDNA immediately after its appearance in the cytosol at endosome breakdown and is required to avoid autophagy. This is Barrier-to-autointegration factor (banf1) from Danio rerio (Zebrafish).